The sequence spans 141 residues: Nucleoside diphosphate kinase (141 aa).

Positions 9, 57, 85, 91, 102, and 112 each coordinate ATP. Residue His115 is the Pros-phosphohistidine intermediate of the active site.

The protein belongs to the NDK family. Homotetramer. Requires Mg(2+) as cofactor.

It is found in the cytoplasm. The enzyme catalyses a 2'-deoxyribonucleoside 5'-diphosphate + ATP = a 2'-deoxyribonucleoside 5'-triphosphate + ADP. It carries out the reaction a ribonucleoside 5'-diphosphate + ATP = a ribonucleoside 5'-triphosphate + ADP. Functionally, major role in the synthesis of nucleoside triphosphates other than ATP. The ATP gamma phosphate is transferred to the NDP beta phosphate via a ping-pong mechanism, using a phosphorylated active-site intermediate. The polypeptide is Nucleoside diphosphate kinase (Chlamydia felis (strain Fe/C-56) (Chlamydophila felis)).